A 1052-amino-acid chain; its full sequence is Membrane-bound transcription factor site-1 protease (1052 aa).

The N-terminal stretch at 1–17 (MKLVNIWLLLLVVLLCG) is a signal peptide. Positions 18 to 186 (KKHLGDRLEK…TGRHSSRRLL (169 aa)) are excised as a propeptide. Serine 168 is modified (phosphoserine; by FAM20C). The Lumenal segment spans residues 187 to 998 (RAIPRQVAQT…IMPGRYNQEV (812 aa)). Residues 190–472 (PRQVAQTLQA…HGKLDLLRAY (283 aa)) enclose the Peptidase S8 domain. Aspartate 218 serves as the catalytic Charge relay system. Asparagine 236 carries an N-linked (GlcNAc...) asparagine glycan. Catalysis depends on histidine 249, which acts as the Charge relay system. An N-linked (GlcNAc...) asparagine glycan is attached at asparagine 305. The active-site Charge relay system is serine 414. N-linked (GlcNAc...) asparagine glycosylation is found at asparagine 515 and asparagine 728. The span at 877–887 (PSLSHSGNRQR) shows a compositional bias: polar residues. The interval 877–899 (PSLSHSGNRQRPPSGAGSVTPER) is disordered. The N-linked (GlcNAc...) asparagine glycan is linked to asparagine 939. Residues 999 to 1021 (GQTIPVFAFLGAMVVLAFFVVQI) traverse the membrane as a helical segment. The Cytoplasmic segment spans residues 1022 to 1052 (NKAKSRPKRRKPRVKRPQLMQQVHPPKTPSV). The segment covering 1027–1037 (RPKRRKPRVKR) has biased composition (basic residues). Positions 1027 to 1052 (RPKRRKPRVKRPQLMQQVHPPKTPSV) are disordered.

It belongs to the peptidase S8 family. In terms of assembly, interacts with LYSET; this interaction bridges GNPTAB to MBTPS1. It depends on Ca(2+) as a cofactor. The 148 kDa zymogen is processed progressively into two membrane-bound 120 and 106 kDa forms in the endoplasmic reticulum, and late into a secreted 98 kDa form. The propeptide is autocatalytically removed through an intramolecular cleavage after Leu-186. Further cleavage generates 14, 10, and 8 kDa intermediates. Widely expressed.

The protein localises to the endoplasmic reticulum membrane. The protein resides in the golgi apparatus membrane. The catalysed reaction is Processes precursors containing basic and hydrophobic/aliphatic residues at P4 and P2, respectively, with a relatively relaxed acceptance of amino acids at P1 and P3.. With respect to regulation, inhibited by divalent copper and zinc ions, but not by nickel or cobalt. Inhibited by its prosegment, but not smaller fragments. Inhibited by 4-(2-aminoethyl)benzenesulfonyl fluoride (AEBSF), a serine protease inhibitor. Functionally, serine protease that cleaves after hydrophobic or small residues, provided that Arg or Lys is in position P4: known substrates include SREBF1/SREBP1, SREBF2/SREBP2, BDNF, GNPTAB, ATF6, ATF6B and FAM20C. Cleaves substrates after Arg-Ser-Val-Leu (SREBP2), Arg-His-Leu-Leu (ATF6), Arg-Gly-Leu-Thr (BDNF) and its own propeptide after Arg-Arg-Leu-Leu. Catalyzes the first step in the proteolytic activation of the sterol regulatory element-binding proteins (SREBPs) SREBF1/SREBP1 and SREBF2/SREBP2. Also mediates the first step in the proteolytic activation of the cyclic AMP-dependent transcription factor ATF-6 (ATF6 and ATF6B). Mediates the protein cleavage of GNPTAB into subunit alpha and beta, thereby participating in biogenesis of lysosomes. Cleaves the propeptide from FAM20C which is required for FAM20C secretion from the Golgi apparatus membrane and for enhancement of FAM20C kinase activity, promoting osteoblast differentiation and biomineralization. Involved in the regulation of M6P-dependent Golgi-to-lysosome trafficking of lysosomal enzymes. It is required for the activation of CREB3L2/BBF2H7, a transcriptional activator of MIA3/TANGO and other genes controlling mega vesicle formation. Therefore, it plays a key role in the regulation of mega vesicle-mediated collagen trafficking. In astrocytes and osteoblasts, upon DNA damage and ER stress, mediates the first step of the regulated intramembrane proteolytic activation of the transcription factor CREB3L1, leading to the inhibition of cell-cycle progression. This is Membrane-bound transcription factor site-1 protease from Homo sapiens (Human).